The chain runs to 287 residues: Ribosomal RNA small subunit methyltransferase A (287 aa).

The S-adenosyl-L-methionine site is built by N28, L30, G55, E77, D103, and N123.

It belongs to the class I-like SAM-binding methyltransferase superfamily. rRNA adenine N(6)-methyltransferase family. RsmA subfamily.

Its subcellular location is the cytoplasm. It carries out the reaction adenosine(1518)/adenosine(1519) in 16S rRNA + 4 S-adenosyl-L-methionine = N(6)-dimethyladenosine(1518)/N(6)-dimethyladenosine(1519) in 16S rRNA + 4 S-adenosyl-L-homocysteine + 4 H(+). Its function is as follows. Specifically dimethylates two adjacent adenosines (A1518 and A1519) in the loop of a conserved hairpin near the 3'-end of 16S rRNA in the 30S particle. May play a critical role in biogenesis of 30S subunits. This Rhodopseudomonas palustris (strain HaA2) protein is Ribosomal RNA small subunit methyltransferase A.